The chain runs to 285 residues: Bifunctional protein FolD (285 aa).

NADP(+) contacts are provided by residues 166–168 (GAS) and Ile232.

This sequence belongs to the tetrahydrofolate dehydrogenase/cyclohydrolase family. As to quaternary structure, homodimer.

It catalyses the reaction (6R)-5,10-methylene-5,6,7,8-tetrahydrofolate + NADP(+) = (6R)-5,10-methenyltetrahydrofolate + NADPH. The catalysed reaction is (6R)-5,10-methenyltetrahydrofolate + H2O = (6R)-10-formyltetrahydrofolate + H(+). It participates in one-carbon metabolism; tetrahydrofolate interconversion. Its function is as follows. Catalyzes the oxidation of 5,10-methylenetetrahydrofolate to 5,10-methenyltetrahydrofolate and then the hydrolysis of 5,10-methenyltetrahydrofolate to 10-formyltetrahydrofolate. The chain is Bifunctional protein FolD from Vibrio vulnificus (strain CMCP6).